The following is a 480-amino-acid chain: uncharacterized protein (480 aa).

Residues 1–21 (MSRYFSFFFLALFLHYRIIVA) form the signal peptide. 2 disordered regions span residues 38–72 (SSHL…SAEC) and 116–147 (SPLI…NDQT). A compositionally biased stretch (low complexity) spans 51–60 (LTQSHSSLSD). A compositionally biased stretch (polar residues) spans 133-144 (LKTSSEAQGDTN). Residues 153 to 173 (YAVEIACVCFLIALAINYFVG) traverse the membrane as a helical segment. The interval 404 to 480 (QARNKTESGR…VPKMKMSRSH (77 aa)) is disordered. A compositionally biased stretch (basic and acidic residues) spans 407 to 465 (NKTESGRQKAAEEAYKELHNARQEALQKKKAEKKKMMEEAEAKMSAEVIRKKEAKERAR). Residues 411 to 467 (SGRQKAAEEAYKELHNARQEALQKKKAEKKKMMEEAEAKMSAEVIRKKEAKERARQV) adopt a coiled-coil conformation. A compositionally biased stretch (basic residues) spans 466–480 (QVKKAVPKMKMSRSH).

Its subcellular location is the membrane. This is an uncharacterized protein from Arabidopsis thaliana (Mouse-ear cress).